The sequence spans 132 residues: D-ribose pyranase (132 aa).

His-20 (proton donor) is an active-site residue. Substrate is bound by residues Asp-28, His-98, and 121–123 (YSN).

It belongs to the RbsD / FucU family. RbsD subfamily. As to quaternary structure, homodecamer.

It localises to the cytoplasm. It catalyses the reaction beta-D-ribopyranose = beta-D-ribofuranose. It participates in carbohydrate metabolism; D-ribose degradation; D-ribose 5-phosphate from beta-D-ribopyranose: step 1/2. Functionally, catalyzes the interconversion of beta-pyran and beta-furan forms of D-ribose. This chain is D-ribose pyranase, found in Kosmotoga olearia (strain ATCC BAA-1733 / DSM 21960 / TBF 19.5.1).